A 110-amino-acid polypeptide reads, in one-letter code: Nucleoid-associated protein SYO3AOP1_1366 (110 aa).

Belongs to the YbaB/EbfC family. In terms of assembly, homodimer.

The protein resides in the cytoplasm. It is found in the nucleoid. Binds to DNA and alters its conformation. May be involved in regulation of gene expression, nucleoid organization and DNA protection. This is Nucleoid-associated protein SYO3AOP1_1366 from Sulfurihydrogenibium sp. (strain YO3AOP1).